Here is a 338-residue protein sequence, read N- to C-terminus: MATRARGFSLLRGRLGRGPVRAPGVAERAWRGFGSSGRRHEAVIISGTNMAKQIQKEIQQGVESWIALGNRRPHLSIILVGDNPASHTYVRNKIKAASAVGICSELIIKPKNVSQEELLDITDQLNMDPRVSGILVQLPLPDHVDERTICNGIAPEKDVDGFHIINIGRLCLDQHSLIPATASAVWEIIKRAGIETFGKNVVVAGRSKNVGMPIAMLLHTDGEHERPGGDATVTIAHRYTPREQLKAHTQLADIIIVAAGIPRLITADMVREGAAVIDVGINYIQDPVTGKTKLVGDVDFEAVKKKASFITPVPGGVGPMTVAMLLKNTLLAAKNIAY.

Substrate is bound by residues 89-93 (YVRNK) and 136-138 (VQL). NAD(+) is bound by residues 205 to 207 (GRS) and Arg-238. Residue 314-318 (PGGVG) participates in substrate binding.

This sequence belongs to the tetrahydrofolate dehydrogenase/cyclohydrolase family. Mg(2+) serves as cofactor. In terms of tissue distribution, widely expressed.

It localises to the mitochondrion inner membrane. It carries out the reaction (6R)-5,10-methylene-5,6,7,8-tetrahydrofolate + NAD(+) = (6R)-5,10-methenyltetrahydrofolate + NADH. The enzyme catalyses (6R)-5,10-methenyltetrahydrofolate + H2O = (6R)-10-formyltetrahydrofolate + H(+). It catalyses the reaction (6R)-5,10-methylene-5,6,7,8-tetrahydrofolate + NADP(+) = (6R)-5,10-methenyltetrahydrofolate + NADPH. Its pathway is one-carbon metabolism; tetrahydrofolate interconversion. In terms of biological role, bifunctional mitochondrial folate-interconverting enzyme that has both NAD/NADP-dependent methylenetetrahydrofolate dehydrogenase and methenyltetrahydrofolate cyclohydrolase activities. The sequence is that of Bifunctional methylenetetrahydrofolate dehydrogenase/cyclohydrolase 2, mitochondrial from Mus musculus (Mouse).